A 604-amino-acid polypeptide reads, in one-letter code: Inositol-3-phosphate synthase 1 (604 aa).

NAD(+)-binding residues include Gly88, Gly89, Asn90, Asn91, Asp163, Ser198, Val199, Gln210, Arg213, Ser251, Gly252, Asn253, Thr254, Ser303, Asp327, Leu328, Thr330, Asn361, Asn362, Asp363, Lys376, Gly456, Asp457, Asp485, and Ser486.

It belongs to the myo-inositol 1-phosphate synthase family. NAD(+) serves as cofactor.

It catalyses the reaction D-glucose 6-phosphate = 1D-myo-inositol 3-phosphate. The protein operates within polyol metabolism; myo-inositol biosynthesis; myo-inositol from D-glucose 6-phosphate: step 1/2. In terms of biological role, key enzyme in myo-inositol biosynthesis pathway that catalyzes the conversion of glucose 6-phosphate to 1-myo-inositol 1-phosphate in a NAD-dependent manner. Rate-limiting enzyme in the synthesis of all inositol-containing compounds. De novo-synthesized myo-inositol is essential for incorporation into GPI (glycosylphosphatidylinositol) glycolipids during intra-erythrocytic development. This Plasmodium falciparum (isolate 3D7) protein is Inositol-3-phosphate synthase 1.